Here is a 91-residue protein sequence, read N- to C-terminus: Small ribosomal subunit protein uS19 (91 aa).

This sequence belongs to the universal ribosomal protein uS19 family.

In terms of biological role, protein S19 forms a complex with S13 that binds strongly to the 16S ribosomal RNA. The chain is Small ribosomal subunit protein uS19 from Aliarcobacter butzleri (strain RM4018) (Arcobacter butzleri).